A 119-amino-acid chain; its full sequence is Protein TusC (119 aa).

It belongs to the DsrF/TusC family. In terms of assembly, heterohexamer, formed by a dimer of trimers. The hexameric TusBCD complex contains 2 copies each of TusB, TusC and TusD. The TusBCD complex interacts with TusE.

It is found in the cytoplasm. Part of a sulfur-relay system required for 2-thiolation of 5-methylaminomethyl-2-thiouridine (mnm(5)s(2)U) at tRNA wobble positions. In Escherichia coli O45:K1 (strain S88 / ExPEC), this protein is Protein TusC.